The chain runs to 464 residues: Argininosuccinate lyase (464 aa).

This sequence belongs to the lyase 1 family. Argininosuccinate lyase subfamily.

It localises to the cytoplasm. It carries out the reaction 2-(N(omega)-L-arginino)succinate = fumarate + L-arginine. Its pathway is amino-acid biosynthesis; L-arginine biosynthesis; L-arginine from L-ornithine and carbamoyl phosphate: step 3/3. The polypeptide is Argininosuccinate lyase (Stutzerimonas stutzeri (strain A1501) (Pseudomonas stutzeri)).